The sequence spans 616 residues: Replication protein A 70 kDa DNA-binding subunit (616 aa).

Met1 is subject to N-acetylmethionine. Residues Lys22 and Lys88 each participate in a glycyl lysine isopeptide (Lys-Gly) (interchain with G-Cter in ubiquitin) cross-link. Positions 121–155 (GLGQPQVAPPAPAASPAASSRPQPQNGTSGAGSTV) are disordered. The segment covering 134–145 (ASPAASSRPQPQ) has biased composition (low complexity). Positions 146 to 155 (NGTSGAGSTV) are enriched in polar residues. N6-acetyllysine; alternate is present on residues Lys163 and Lys167. Glycyl lysine isopeptide (Lys-Gly) (interchain with G-Cter in ubiquitin); alternate cross-links involve residues Lys163 and Lys167. Residue Thr180 is modified to Phosphothreonine. A Glycyl lysine isopeptide (Lys-Gly) (interchain with G-Cter in ubiquitin) cross-link involves residue Lys183. Thr191 is modified (phosphothreonine). The segment at residues 197 to 281 (WTICARVTNK…VKNDYEMTFN (85 aa)) is a DNA-binding region (OB). Residues Lys220 and Lys244 each participate in a glycyl lysine isopeptide (Lys-Gly) (interchain with G-Cter in ubiquitin) cross-link. At Lys259 the chain carries N6-acetyllysine; alternate. A Glycyl lysine isopeptide (Lys-Gly) (interchain with G-Cter in ubiquitin); alternate cross-link involves residue Lys259. Residues Lys267 and Lys331 each participate in a glycyl lysine isopeptide (Lys-Gly) (interchain with G-Cter in ubiquitin) cross-link. A Phosphoserine modification is found at Ser384. Residues Lys410 and Lys431 each participate in a glycyl lysine isopeptide (Lys-Gly) (interchain with G-Cter in ubiquitin) cross-link. Lys449 is covalently cross-linked (Glycyl lysine isopeptide (Lys-Gly) (interchain with G-Cter in SUMO)). A Glycyl lysine isopeptide (Lys-Gly) (interchain with G-Cter in ubiquitin) cross-link involves residue Lys458. The C4-type zinc-finger motif lies at 481-503 (CPTQDCNKKVIDQQNGLYRCEKC). Lys553 is covalently cross-linked (Glycyl lysine isopeptide (Lys-Gly) (interchain with G-Cter in ubiquitin)). Lys577 participates in a covalent cross-link: Glycyl lysine isopeptide (Lys-Gly) (interchain with G-Cter in SUMO).

Belongs to the replication factor A protein 1 family. Component of the canonical replication protein A complex (RPA), a heterotrimer composed of RPA1, RPA2 and RPA3. The DNA-binding activity may reside exclusively on the RPA1 subunit. Interacts with PRPF19; the PRP19-CDC5L complex is recruited to the sites of DNA repair where it ubiquitinates the replication protein A complex (RPA). Interacts with RIPK1. Interacts with the polymerase alpha subunit POLA1/p180; this interaction stabilizes the replicative complex and reduces the misincorporation rate of DNA polymerase alpha by acting as a fidelity clamp. Interacts with RAD51 and SENP6 to regulate DNA repair. Interacts with HELB; this interaction promotes HELB recruitment to chromatin following DNA damage. Interacts with PRIMPOL; leading to recruit PRIMPOL on chromatin and stimulate its DNA primase activity. Interacts with XPA; the interaction is direct and associates XPA with the RPA complex. Interacts with ETAA1; the interaction is direct and promotes ETAA1 recruitment at stalled replication forks. Interacts with RPA1; this interaction associates HROB with the RPA complex. Interacts (when poly-ADP-ribosylated) with HTATSF1. In terms of processing, DNA damage-induced 'Lys-63'-linked polyubiquitination by PRPF19 mediates ATRIP recruitment to the RPA complex at sites of DNA damage and activation of ATR. Ubiquitinated by RFWD3 at stalled replication forks in response to DNA damage: ubiquitination by RFWD3 does not lead to degradation by the proteasome and promotes removal of the RPA complex from stalled replication forks, promoting homologous recombination. Sumoylated on lysine residues Lys-449 and Lys-577, with Lys-449 being the major site. Sumoylation promotes recruitment of RAD51 to the DNA damage foci to initiate DNA repair through homologous recombination. Desumoylated by SENP6. Post-translationally, poly-ADP-ribosylated by PARP1; promoting recruitment of HTATSF1.

The protein localises to the nucleus. Its subcellular location is the PML body. In terms of biological role, as part of the heterotrimeric replication protein A complex (RPA/RP-A), binds and stabilizes single-stranded DNA intermediates, that form during DNA replication or upon DNA stress. It prevents their reannealing and in parallel, recruits and activates different proteins and complexes involved in DNA metabolism. Thereby, it plays an essential role both in DNA replication and the cellular response to DNA damage. In the cellular response to DNA damage, the RPA complex controls DNA repair and DNA damage checkpoint activation. Through recruitment of ATRIP activates the ATR kinase a master regulator of the DNA damage response. It is required for the recruitment of the DNA double-strand break repair factors RAD51 and RAD52 to chromatin in response to DNA damage. Also recruits to sites of DNA damage proteins like XPA and XPG that are involved in nucleotide excision repair and is required for this mechanism of DNA repair. Also plays a role in base excision repair (BER) probably through interaction with UNG. Also recruits SMARCAL1/HARP, which is involved in replication fork restart, to sites of DNA damage. May also play a role in telomere maintenance. This is Replication protein A 70 kDa DNA-binding subunit (RPA1) from Pongo abelii (Sumatran orangutan).